We begin with the raw amino-acid sequence, 81 residues long: Mipartoxin-1A (81 aa).

The first 21 residues, Met-1–Ser-21, serve as a signal peptide directing secretion. Intrachain disulfides connect Cys-24–Cys-42, Cys-35–Cys-61, Cys-65–Cys-73, and Cys-74–Cys-79.

The protein belongs to the three-finger toxin family. Short-chain subfamily. Expressed by the venom gland.

Its subcellular location is the secreted. Snake venom neurotoxin that blocks neuromuscular transmission, presenting a postsynaptic action through the nicotinic acetylcholine receptor (nAChR). Has no cytotoxic activity. In Micrurus mipartitus (Red-tailed coral snake), this protein is Mipartoxin-1A.